Here is a 525-residue protein sequence, read N- to C-terminus: Lymphocyte activation gene 3 protein (525 aa).

Residues 1–22 (MWEAQFLGLLFLQPLWVAPVKP) form the signal peptide. Topologically, residues 23–450 (LQPGAEVPVV…APGALPAGHL (428 aa)) are extracellular. In terms of domain architecture, Ig-like V-type spans 37–167 (GAPAQLPCSP…LSCRLRLRLG (131 aa)). Residues 37–252 (GAPAQLPCSP…LTYRDGFNVS (216 aa)) are interaction with FGL1. A disulfide bridge links cysteine 44 with cysteine 160. The interval 62–97 (TWQHQPDSGPPAAAPGHPLAPGPHPAAPSSWGPRPR) is disordered. Residues 69 to 87 (SGPPAAAPGHPLAPGPHPA) are compositionally biased toward pro residues. One can recognise an Ig-like C2-type 1 domain in the interval 168 to 252 (QASMTASPPG…LTYRDGFNVS (85 aa)). N-linked (GlcNAc...) asparagine glycosylation occurs at asparagine 188. Cysteine 189 and cysteine 241 are joined by a disulfide. Asparagine 250 and asparagine 256 each carry an N-linked (GlcNAc...) asparagine glycan. Ig-like C2-type domains are found at residues 265–343 (PTPL…QQLN) and 348–419 (LAII…QGER). Cysteine 282 and cysteine 333 are disulfide-bonded. N-linked (GlcNAc...) asparagine glycosylation is present at asparagine 343. Cysteine 369 and cysteine 412 are oxidised to a cystine. The tract at residues 429-450 (ELSSPGAQRSGRAPGALPAGHL) is connecting peptide. A helical membrane pass occupies residues 451–471 (LLFLILGVLSLLLLVTGAFGF). At 472–525 (HLWRRQWRPRRFSALEQGIHPPQAQSKIEELEQEPEPEPEPEPEPEPEPEPEQL) the chain is on the cytoplasmic side. The interval 487–525 (EQGIHPPQAQSKIEELEQEPEPEPEPEPEPEPEPEPEQL) is disordered. A KIEELE motif motif is present at residues 498-503 (KIEELE). The segment at 501–524 (ELEQEPEPEPEPEPEPEPEPEPEQ) is 12 X 2 AA tandem repeats of E-X. Positions 502 to 525 (LEQEPEPEPEPEPEPEPEPEPEQL) are enriched in acidic residues.

It belongs to the LAG3 family. As to quaternary structure, interacts with MHC class II (MHC-II); selectively recognizes stable complexes of peptide and MHC-II. Interacts with FGL1 (via the Fibrinogen C-terminal domain). Post-translationally, proteolytically cleaved by ADAM10 and ADAM17 within the connecting peptide region, leading to release of Secreted lymphocyte activation gene 3 protein (sLAG-3). ADAM10 mediates constitutive cleavage, but cleavage increases following T-cell activation, whereas shedding by ADAM17 is induced by TCR signaling in a PRKCQ-dependent manner. Primarily expressed in activated T-cells and a subset of natural killer (NK) cells.

The protein localises to the cell membrane. Its subcellular location is the secreted. Lymphocyte activation gene 3 protein: Inhibitory receptor on antigen activated T-cells. Delivers inhibitory signals upon binding to ligands, such as FGL1. FGL1 constitutes a major ligand of LAG3 and is responsible for LAG3 T-cell inhibitory function. Following TCR engagement, LAG3 associates with CD3-TCR in the immunological synapse and directly inhibits T-cell activation. May inhibit antigen-specific T-cell activation in synergy with PDCD1/PD-1, possibly by acting as a coreceptor for PDCD1/PD-1. Negatively regulates the proliferation, activation, effector function and homeostasis of both CD8(+) and CD4(+) T-cells. Also mediates immune tolerance: constitutively expressed on a subset of regulatory T-cells (Tregs) and contributes to their suppressive function. Also acts as a negative regulator of plasmacytoid dendritic cell (pDCs) activation. Binds MHC class II (MHC-II); the precise role of MHC-II-binding is however unclear. Its function is as follows. May function as a ligand for MHC class II (MHC-II) on antigen-presenting cells (APC), promoting APC activation/maturation and driving Th1 immune response. The polypeptide is Lymphocyte activation gene 3 protein (Homo sapiens (Human)).